A 156-amino-acid polypeptide reads, in one-letter code: Small ribosomal subunit protein uS7 (156 aa).

It belongs to the universal ribosomal protein uS7 family. Part of the 30S ribosomal subunit. Contacts proteins S9 and S11.

One of the primary rRNA binding proteins, it binds directly to 16S rRNA where it nucleates assembly of the head domain of the 30S subunit. Is located at the subunit interface close to the decoding center, probably blocks exit of the E-site tRNA. This chain is Small ribosomal subunit protein uS7, found in Streptococcus pneumoniae (strain Taiwan19F-14).